The primary structure comprises 129 residues: Glycine cleavage system H protein (129 aa).

Residues 24-106 (LLKIGVSEFA…IGEGWLVILK (83 aa)) enclose the Lipoyl-binding domain. The residue at position 65 (K65) is an N6-lipoyllysine.

It belongs to the GcvH family. In terms of assembly, the glycine cleavage system is composed of four proteins: P, T, L and H. Requires (R)-lipoate as cofactor.

Functionally, the glycine cleavage system catalyzes the degradation of glycine. The H protein shuttles the methylamine group of glycine from the P protein to the T protein. This is Glycine cleavage system H protein from Prochlorococcus marinus (strain MIT 9312).